A 63-amino-acid polypeptide reads, in one-letter code: Keratin-associated protein 8-1 (63 aa).

The 12 X 2 AA repeats of G-[YCGS] stretch occupies residues 12–54 (PGCYWGSYGYPLGYSVGCGYGSTYSPVGYGFGYGYNGCGAFGY).

This sequence belongs to the KRTAP type 8 family. In terms of assembly, interacts with hair keratins. As to expression, is essentially restricted to only one vertical half of the hair forming compartment and in beard hairs is absent from the central medulla.

In the hair cortex, hair keratin intermediate filaments are embedded in an interfilamentous matrix, consisting of hair keratin-associated proteins (KRTAP), which are essential for the formation of a rigid and resistant hair shaft through their extensive disulfide bond cross-linking with abundant cysteine residues of hair keratins. The matrix proteins include the high-sulfur and high-glycine-tyrosine keratins. This Homo sapiens (Human) protein is Keratin-associated protein 8-1 (KRTAP8-1).